Here is a 605-residue protein sequence, read N- to C-terminus: DNA primase (605 aa).

The segment at 37 to 61 adopts a CHC2-type zinc-finger fold; that stretch reads CPFHADKNPSMHINPIKGFYHCFAC. Residues 248-329 enclose the Toprim domain; the sequence is KEIIVCEGYM…DGKVAILQGG (82 aa). 3 residues coordinate Mg(2+): Glu-254, Asp-298, and Asp-300.

It belongs to the DnaG primase family. Monomer. Interacts with DnaB. The cofactor is Zn(2+). Requires Mg(2+) as cofactor.

It catalyses the reaction ssDNA + n NTP = ssDNA/pppN(pN)n-1 hybrid + (n-1) diphosphate.. Functionally, RNA polymerase that catalyzes the synthesis of short RNA molecules used as primers for DNA polymerase during DNA replication. This chain is DNA primase, found in Campylobacter jejuni subsp. jejuni serotype O:2 (strain ATCC 700819 / NCTC 11168).